Reading from the N-terminus, the 130-residue chain is Large ribosomal subunit protein eL32 (130 aa).

Belongs to the eukaryotic ribosomal protein eL32 family.

In Pyrococcus abyssi (strain GE5 / Orsay), this protein is Large ribosomal subunit protein eL32 (rpl32e).